We begin with the raw amino-acid sequence, 86 residues long: Small ribosomal subunit protein bS20 (86 aa).

A compositionally biased stretch (basic residues) spans 1–11 (MANIKQQKKRN). The segment at 1 to 21 (MANIKQQKKRNKTNEKRRLQN) is disordered.

The protein belongs to the bacterial ribosomal protein bS20 family.

Its function is as follows. Binds directly to 16S ribosomal RNA. The protein is Small ribosomal subunit protein bS20 of Onion yellows phytoplasma (strain OY-M).